A 434-amino-acid chain; its full sequence is Glutamyl-tRNA reductase (434 aa).

Residues 49–52 (TCNR), serine 109, 114–116 (EPQ), and glutamine 120 contribute to the substrate site. Cysteine 50 (nucleophile) is an active-site residue. Residue 189–194 (GAGEMC) participates in NADP(+) binding.

The protein belongs to the glutamyl-tRNA reductase family. Homodimer.

It carries out the reaction (S)-4-amino-5-oxopentanoate + tRNA(Glu) + NADP(+) = L-glutamyl-tRNA(Glu) + NADPH + H(+). It functions in the pathway porphyrin-containing compound metabolism; protoporphyrin-IX biosynthesis; 5-aminolevulinate from L-glutamyl-tRNA(Glu): step 1/2. Functionally, catalyzes the NADPH-dependent reduction of glutamyl-tRNA(Glu) to glutamate 1-semialdehyde (GSA). This is Glutamyl-tRNA reductase from Geobacter metallireducens (strain ATCC 53774 / DSM 7210 / GS-15).